Reading from the N-terminus, the 470-residue chain is Putative multidrug resistance protein MdtD (470 aa).

The Periplasmic portion of the chain corresponds to 1–11 (MTELPDNTRWQ). The chain crosses the membrane as a helical span at residues 12–32 (LWIVAFGFFMQSLDTTIVNTA). Over 33–48 (LPSMAKSLGESPLHMH) the chain is Cytoplasmic. Residues 49-69 (MVVVSYVLTVAVMLPASGWLA) form a helical membrane-spanning segment. Residues 70 to 76 (DKIGVRN) are Periplasmic-facing. A helical membrane pass occupies residues 77–97 (IFFAAIVLFTLGSLFCALSGT). Topologically, residues 98–101 (LNQL) are cytoplasmic. A helical membrane pass occupies residues 102–124 (VLARVLQGVGGAMMVPVGRLTVM). Residues 125–137 (KIVPRAQYMAAMT) lie on the Periplasmic side of the membrane. The chain crosses the membrane as a helical span at residues 138–158 (FVTLPGQIGPLLGPALGGVLV). The Cytoplasmic segment spans residues 159 to 164 (EYASWH). A helical membrane pass occupies residues 165–185 (WIFLINIPVGIVGAMATFMLM). The Periplasmic segment spans residues 186–196 (PNYTIETRRFD). A helical membrane pass occupies residues 197–217 (LPGFLLLAIGMAVLTLALDGS). Topologically, residues 218-224 (KSMGISP) are cytoplasmic. A helical transmembrane segment spans residues 225–245 (WTLAGLAAGGAAAILLYLFHA). The Periplasmic portion of the chain corresponds to 246–262 (KKSSGALFSLRLFRTPT). Residues 263–283 (FSLGLLGSFAGRIGSGMLPFM) form a helical membrane-spanning segment. Residues 284–285 (TP) lie on the Cytoplasmic side of the membrane. Residues 286–306 (VFLQIGLGFSPFHAGLMMIPM) traverse the membrane as a helical segment. The Periplasmic portion of the chain corresponds to 307-341 (VLGSMGMKRIVVQIVNRFGYRRVLVATTLGLALVS). The chain crosses the membrane as a helical span at residues 342-362 (LLFMSVALLGWYYLLPLVLLL). Residues 363 to 395 (QGMVNSARFSSMNTLTLKDLPDTLASSGNSLLS) are Cytoplasmic-facing. Residues 396–416 (MIMQLSMSIGVTIAGMLLGMF) traverse the membrane as a helical segment. Over 417–430 (GQQHIGIDSSATHH) the chain is Periplasmic. Residues 431-451 (VFMYTWLCMAVIIALPAIIFA) traverse the membrane as a helical segment. The Cytoplasmic portion of the chain corresponds to 452-470 (RVPNDTQQNMVISRRKRSL).

Belongs to the major facilitator superfamily. TCR/Tet family.

Its subcellular location is the cell inner membrane. The sequence is that of Putative multidrug resistance protein MdtD from Salmonella paratyphi A (strain ATCC 9150 / SARB42).